Reading from the N-terminus, the 78-residue chain is UPF0270 protein YPO0179/y3960/YP_0178 (78 aa).

It belongs to the UPF0270 family.

This Yersinia pestis protein is UPF0270 protein YPO0179/y3960/YP_0178.